The following is a 42-amino-acid chain: Large ribosomal subunit protein bL36 (42 aa).

Belongs to the bacterial ribosomal protein bL36 family.

This is Large ribosomal subunit protein bL36 from Ehrlichia ruminantium (strain Gardel).